Consider the following 342-residue polypeptide: Zinc transporter ZIP11 (342 aa).

7 helical membrane passes run 12–32 (LLGTFFTWAMTAAGAALVFIF), 44–64 (LGFAAGVMLAASYWSLLAPAV), 72–92 (GFGAFAFFPVAVGFTLGAAFV), 194–214 (IALLILAITIHNIPEGLAVGV), 263–285 (FWYGQLSGMVEPLAGVFGAFAVV), 290–307 (ILPYALAFAAGAMVYVVM), and 322–342 (LASWASILGFVVMMSLDVGLG).

The protein belongs to the ZIP transporter (TC 2.A.5) family. As to expression, highly expressed in the testes and portions of the digestive system including the stomach, ileum and cecum. In contrast, expressed at very low levels in liver, duodenum, jejunum, and colon.

The protein localises to the cell membrane. Its subcellular location is the nucleus. It is found in the cytoplasm. It localises to the golgi apparatus. It catalyses the reaction Zn(2+)(in) = Zn(2+)(out). The catalysed reaction is Cu(2+)(in) = Cu(2+)(out). Functionally, zinc importer that regulates cytosolic zinc concentration either via zinc influx from the extracellular compartment or efflux from intracellular organelles such as Golgi apparatus. May transport copper ions as well. The transport mechanism remains to be elucidated. The chain is Zinc transporter ZIP11 (Slc39a11) from Mus musculus (Mouse).